The primary structure comprises 257 residues: Probable pectate lyase E (257 aa).

The first 17 residues, methionine 1–alanine 17, serve as a signal peptide directing secretion.

Belongs to the polysaccharide lyase 3 family. Requires Ca(2+) as cofactor.

Its subcellular location is the secreted. It catalyses the reaction Eliminative cleavage of (1-&gt;4)-alpha-D-galacturonan to give oligosaccharides with 4-deoxy-alpha-D-galact-4-enuronosyl groups at their non-reducing ends.. Its function is as follows. Pectinolytic enzyme consist of four classes of enzymes: pectin lyase, polygalacturonase, pectin methylesterase and rhamnogalacturonase. Among pectinolytic enzymes, pectin lyase is the most important in depolymerization of pectin, since it cleaves internal glycosidic bonds of highly methylated pectins. Favors pectate, the anion, over pectin, the methyl ester. The protein is Probable pectate lyase E (plyE) of Aspergillus flavus (strain ATCC 200026 / FGSC A1120 / IAM 13836 / NRRL 3357 / JCM 12722 / SRRC 167).